A 422-amino-acid chain; its full sequence is Exodeoxyribonuclease 7 large subunit (422 aa).

The protein belongs to the XseA family. Heterooligomer composed of large and small subunits.

Its subcellular location is the cytoplasm. The enzyme catalyses Exonucleolytic cleavage in either 5'- to 3'- or 3'- to 5'-direction to yield nucleoside 5'-phosphates.. In terms of biological role, bidirectionally degrades single-stranded DNA into large acid-insoluble oligonucleotides, which are then degraded further into small acid-soluble oligonucleotides. This Leptospira borgpetersenii serovar Hardjo-bovis (strain JB197) protein is Exodeoxyribonuclease 7 large subunit.